We begin with the raw amino-acid sequence, 594 residues long: Aspartate--tRNA(Asp/Asn) ligase (594 aa).

E175 is a binding site for L-aspartate. The interval 199–202 (QQFK) is aspartate. Residues R221 and H455 each coordinate L-aspartate. 221–223 (RDE) serves as a coordination point for ATP. E489 lines the ATP pocket. R496 serves as a coordination point for L-aspartate. 541–544 (GIDR) is an ATP binding site.

It belongs to the class-II aminoacyl-tRNA synthetase family. Type 1 subfamily. In terms of assembly, homodimer.

The protein localises to the cytoplasm. The catalysed reaction is tRNA(Asx) + L-aspartate + ATP = L-aspartyl-tRNA(Asx) + AMP + diphosphate. Aspartyl-tRNA synthetase with relaxed tRNA specificity since it is able to aspartylate not only its cognate tRNA(Asp) but also tRNA(Asn). Reaction proceeds in two steps: L-aspartate is first activated by ATP to form Asp-AMP and then transferred to the acceptor end of tRNA(Asp/Asn). In Pelagibacter ubique (strain HTCC1062), this protein is Aspartate--tRNA(Asp/Asn) ligase.